The primary structure comprises 457 residues: ATP-dependent RNA helicase DbpA (457 aa).

Positions 3 to 31 (AFSTLNVLPPAQLTNLNELGYLTMTPVQA) match the Q motif motif. One can recognise a Helicase ATP-binding domain in the interval 34 to 205 (LPAILAGKDV…GRVQRDPLAI (172 aa)). 47-54 (AKTGSGKT) is a binding site for ATP. Residues 153–156 (DEAD) carry the DEAD box motif. Residues 230-376 (PLLQRLLSLH…QTPPANSSIA (147 aa)) form the Helicase C-terminal domain. Residues 383–457 (ATLCIDGGKK…GKTCRVRLLK (75 aa)) are involved in 23S rRNA binding.

Belongs to the DEAD box helicase family. DbpA subfamily. In terms of assembly, monomer.

It is found in the cytoplasm. The enzyme catalyses ATP + H2O = ADP + phosphate + H(+). Requires hairpin 92 of 23S rRNA for optimal activity. ATPase activity is stimulated by interaction of the N-terminal domain with RNA. DEAD-box RNA helicase involved in the assembly of the 50S ribosomal subunit. Has an RNA-dependent ATPase activity, which is specific for 23S rRNA, and a 3' to 5' RNA helicase activity that uses the energy of ATP hydrolysis to destabilize and unwind short rRNA duplexes. Requires a single-stranded RNA loading site on the 3' side of the substrate helix. The sequence is that of ATP-dependent RNA helicase DbpA from Escherichia coli (strain K12).